A 121-amino-acid chain; its full sequence is MARIAGVDLPKKKRIEYGLTYIYGIGLHTSRKILDKTGISYDKRVHELSEDEAAAIRKEIQENYMVEGDLRKQVAMDIKALMDLGSFRGLRHRKGLPVRGQKTKTNARTRKGKRKTVGAKS.

The disordered stretch occupies residues 93–121; the sequence is RKGLPVRGQKTKTNARTRKGKRKTVGAKS.

This sequence belongs to the universal ribosomal protein uS13 family. Part of the 30S ribosomal subunit. Forms a loose heterodimer with protein S19. Forms two bridges to the 50S subunit in the 70S ribosome.

In terms of biological role, located at the top of the head of the 30S subunit, it contacts several helices of the 16S rRNA. In the 70S ribosome it contacts the 23S rRNA (bridge B1a) and protein L5 of the 50S subunit (bridge B1b), connecting the 2 subunits; these bridges are implicated in subunit movement. Contacts the tRNAs in the A and P-sites. This chain is Small ribosomal subunit protein uS13, found in Campylobacter lari (strain RM2100 / D67 / ATCC BAA-1060).